A 538-amino-acid chain; its full sequence is Nicotinate phosphoribosyltransferase (538 aa).

Nicotinate is bound by residues Tyr21 and Thr210. His213 carries the phosphohistidine modification. Arg318 provides a ligand contact to nicotinate. Thr380 lines the 5-phospho-alpha-D-ribose 1-diphosphate pocket.

Belongs to the NAPRTase family. In terms of assembly, homodimer. Requires Mg(2+) as cofactor. It depends on Mn(2+) as a cofactor. Transiently phosphorylated on a His residue during the reaction cycle. Phosphorylation strongly increases the affinity for substrates and increases the rate of nicotinate D-ribonucleotide production. Dephosphorylation regenerates the low-affinity form of the enzyme, leading to product release.

Its subcellular location is the cytoplasm. The protein localises to the cytosol. It catalyses the reaction nicotinate + 5-phospho-alpha-D-ribose 1-diphosphate + ATP + H2O = nicotinate beta-D-ribonucleotide + ADP + phosphate + diphosphate. The protein operates within cofactor biosynthesis; NAD(+) biosynthesis; nicotinate D-ribonucleotide from nicotinate: step 1/1. Its function is as follows. Catalyzes the first step in the biosynthesis of NAD from nicotinic acid, the ATP-dependent synthesis of beta-nicotinate D-ribonucleotide from nicotinate and 5-phospho-D-ribose 1-phosphate. Helps prevent cellular oxidative stress via its role in NAD biosynthesis. The sequence is that of Nicotinate phosphoribosyltransferase (NAPRT) from Bos taurus (Bovine).